The following is a 99-amino-acid chain: Putative membrane protein insertion efficiency factor (99 aa).

Belongs to the UPF0161 family.

Its subcellular location is the cell membrane. Functionally, could be involved in insertion of integral membrane proteins into the membrane. The chain is Putative membrane protein insertion efficiency factor from Corynebacterium glutamicum (strain ATCC 13032 / DSM 20300 / JCM 1318 / BCRC 11384 / CCUG 27702 / LMG 3730 / NBRC 12168 / NCIMB 10025 / NRRL B-2784 / 534).